Here is a 1064-residue protein sequence, read N- to C-terminus: DNA-directed RNA polymerase subunit beta (1064 aa).

This sequence belongs to the RNA polymerase beta chain family. In terms of assembly, in plastids the minimal PEP RNA polymerase catalytic core is composed of four subunits: alpha, beta, beta', and beta''. When a (nuclear-encoded) sigma factor is associated with the core the holoenzyme is formed, which can initiate transcription.

Its subcellular location is the plastid. It is found in the chloroplast. The enzyme catalyses RNA(n) + a ribonucleoside 5'-triphosphate = RNA(n+1) + diphosphate. Functionally, DNA-dependent RNA polymerase catalyzes the transcription of DNA into RNA using the four ribonucleoside triphosphates as substrates. This Jasminum nudiflorum (Winter jasmine) protein is DNA-directed RNA polymerase subunit beta.